The following is a 442-amino-acid chain: Cytochrome c biogenesis protein CcsB (442 aa).

3 helical membrane passes run 17–37, 76–96, and 162–182; these read LRLAILLLLVIAIASMAGTVI, TPWYLTLLVLFGASLTACTLT, and LGPIVVHASMLLILLGGILGA.

Belongs to the Ccs1/CcsB family. As to quaternary structure, may interact with CcsA.

The protein localises to the cellular thylakoid membrane. Required during biogenesis of c-type cytochromes (cytochrome c6 and cytochrome f) at the step of heme attachment. In Thermosynechococcus vestitus (strain NIES-2133 / IAM M-273 / BP-1), this protein is Cytochrome c biogenesis protein CcsB.